We begin with the raw amino-acid sequence, 98 residues long: NADH-ubiquinone oxidoreductase chain 4L (98 aa).

Helical transmembrane passes span 1–21 (MSLV…GLLM), 29–49 (SLLC…LMIL), and 61–81 (IILL…LVMV).

This sequence belongs to the complex I subunit 4L family. Core subunit of respiratory chain NADH dehydrogenase (Complex I) which is composed of 45 different subunits.

Its subcellular location is the mitochondrion inner membrane. The catalysed reaction is a ubiquinone + NADH + 5 H(+)(in) = a ubiquinol + NAD(+) + 4 H(+)(out). In terms of biological role, core subunit of the mitochondrial membrane respiratory chain NADH dehydrogenase (Complex I) which catalyzes electron transfer from NADH through the respiratory chain, using ubiquinone as an electron acceptor. Part of the enzyme membrane arm which is embedded in the lipid bilayer and involved in proton translocation. This chain is NADH-ubiquinone oxidoreductase chain 4L (MT-ND4L), found in Ovis aries (Sheep).